Consider the following 427-residue polypeptide: MKLNKLAIATLVSAALSQYAFAQTDTKGTIYLTFDDGPINASIDVINVLNQEEVKATFYFNAWHLDGIGDENEDRALEALKLALDSGHIVANHSYDHMVHNCVEEFGPNSAAECNATGDHQINSYQDPAYDASMFAENLSVLEKYLPNITSYPNYKANEFARLPYTNGWRVTKDFKADGLCATSDDLKPWEPGYSCDTANPSNSVKAAIAVQNILANNGYQTHGWDVDWAPENWGIAMPANSLTEAEPFLGYVDSALNTCAPTTINPINSKAQEFPCGTPLHADKVIVLTHEFLFEDGKRGMGATQNLPKLAKFIQLAKQAGYVFDTMDNYTPNWQVGNNYSAGDYVLHLGTVYQAVTSHTAQQDWAPSPTSSLWTNADPATNWTQNVSYKQGDVVTYQGLRYLVNVPHVSQADWTPNSQNTLFTAL.

The N-terminal stretch at 1 to 22 (MKLNKLAIATLVSAALSQYAFA) is a signal peptide. Positions 28–326 (GTIYLTFDDG…LAKQAGYVFD (299 aa)) constitute a NodB homology domain. Chitin-binding type-3 domains lie at 333–375 (PNWQ…SSLW) and 382–419 (TNWT…TPNS).

Belongs to the polysaccharide deacetylase family. Carbohydrate-binding module 12 subfamily.

It carries out the reaction N,N'-diacetylchitobiose + H2O = N-acetyl-beta-D-glucosaminyl-(1-&gt;4)-D-glucosamine + acetate. Its pathway is glycan degradation; chitin degradation. Functionally, specifically catalyzes the degradation of N,N'-diacetylchitobiose. Key enzyme in the chitin catabolic cascade. This is Chitin disaccharide deacetylase (deaA) from Vibrio alginolyticus.